The sequence spans 249 residues: ATP synthase subunit a (249 aa).

The next 5 helical transmembrane spans lie at 33 to 53 (GQVF…SLLA), 92 to 112 (VPFI…GALI), 131 to 151 (INTT…AGFS), 196 to 216 (LVVA…AMIL), and 217 to 237 (GLFT…SYIG).

The protein belongs to the ATPase A chain family. As to quaternary structure, F-type ATPases have 2 components, CF(1) - the catalytic core - and CF(0) - the membrane proton channel. CF(1) has five subunits: alpha(3), beta(3), gamma(1), delta(1), epsilon(1). CF(0) has four main subunits: a, b, b' and c.

Its subcellular location is the cellular thylakoid membrane. Key component of the proton channel; it plays a direct role in the translocation of protons across the membrane. This is ATP synthase subunit a from Synechococcus elongatus (strain ATCC 33912 / PCC 7942 / FACHB-805) (Anacystis nidulans R2).